A 673-amino-acid chain; its full sequence is Kinesin-like protein KIFC1 (673 aa).

Residues Ser-6, Ser-26, Ser-31, and Ser-33 each carry the phosphoserine modification. Disordered regions lie at residues Lys-23–Arg-94 and Val-109–Ala-136. The segment covering Thr-60–Lys-86 has biased composition (polar residues). Residues Gln-142 to Glu-306 are a coiled coil. In terms of domain architecture, Kinesin motor spans Asn-310–Cys-663. Residues Pro-325–Phe-372 form a disordered region. A Phosphothreonine modification is found at Thr-359. Residue Gly-410–Thr-417 coordinates ATP.

The protein belongs to the TRAFAC class myosin-kinesin ATPase superfamily. Kinesin family. NCD subfamily. Binds NUBP1 and NUBP2. Interacts with PPP1R42.

The protein localises to the nucleus. It localises to the cytoplasm. The protein resides in the cytoskeleton. Its subcellular location is the microtubule organizing center. It is found in the centrosome. The protein localises to the spindle. It localises to the early endosome. In terms of biological role, minus end-directed microtubule-dependent motor required for bipolar spindle formation. May contribute to movement of early endocytic vesicles. Regulates cilium formation and structure. The polypeptide is Kinesin-like protein KIFC1 (KIFC1) (Homo sapiens (Human)).